The chain runs to 183 residues: MIPRKAFLTKGTGVHKDRLASFELALRDAKIEKYNLVSVSSILPPNCKLVPREEGLAELKPGAIVHCVLARNDTNEPHRLMASAIGTAVPVNEENYGYISEHHSFGEEEIIAGEYAEDLAATMLATTLGIEFDAEMAWHEREQVYKASGHIFDTFHMCQTAKGDKDGKWTTTVAAMVFVTSKC.

Residue Ser41 is modified to Pyruvic acid (Ser).

It belongs to the PdaD family. The cofactor is pyruvate.

It catalyses the reaction L-arginine + H(+) = agmatine + CO2. The chain is Pyruvoyl-dependent arginine decarboxylase 2 (pdaD2) from Methanosarcina mazei (strain ATCC BAA-159 / DSM 3647 / Goe1 / Go1 / JCM 11833 / OCM 88) (Methanosarcina frisia).